A 166-amino-acid chain; its full sequence is 2-amino-4-hydroxy-6-hydroxymethyldihydropteridine pyrophosphokinase (166 aa).

It belongs to the HPPK family.

It catalyses the reaction 6-hydroxymethyl-7,8-dihydropterin + ATP = (7,8-dihydropterin-6-yl)methyl diphosphate + AMP + H(+). Its pathway is cofactor biosynthesis; tetrahydrofolate biosynthesis; 2-amino-4-hydroxy-6-hydroxymethyl-7,8-dihydropteridine diphosphate from 7,8-dihydroneopterin triphosphate: step 4/4. Catalyzes the transfer of pyrophosphate from adenosine triphosphate (ATP) to 6-hydroxymethyl-7,8-dihydropterin, an enzymatic step in folate biosynthesis pathway. In Streptococcus pyogenes serotype M18 (strain MGAS8232), this protein is 2-amino-4-hydroxy-6-hydroxymethyldihydropteridine pyrophosphokinase (folK).